A 385-amino-acid polypeptide reads, in one-letter code: 4-hydroxy-3-methylbut-2-en-1-yl diphosphate synthase (flavodoxin) 1 (385 aa).

4 residues coordinate [4Fe-4S] cluster: C280, C283, C315, and E322.

This sequence belongs to the IspG family. [4Fe-4S] cluster is required as a cofactor.

It carries out the reaction (2E)-4-hydroxy-3-methylbut-2-enyl diphosphate + oxidized [flavodoxin] + H2O + 2 H(+) = 2-C-methyl-D-erythritol 2,4-cyclic diphosphate + reduced [flavodoxin]. It participates in isoprenoid biosynthesis; isopentenyl diphosphate biosynthesis via DXP pathway; isopentenyl diphosphate from 1-deoxy-D-xylulose 5-phosphate: step 5/6. In terms of biological role, converts 2C-methyl-D-erythritol 2,4-cyclodiphosphate (ME-2,4cPP) into 1-hydroxy-2-methyl-2-(E)-butenyl 4-diphosphate. The chain is 4-hydroxy-3-methylbut-2-en-1-yl diphosphate synthase (flavodoxin) 1 from Streptomyces avermitilis (strain ATCC 31267 / DSM 46492 / JCM 5070 / NBRC 14893 / NCIMB 12804 / NRRL 8165 / MA-4680).